A 679-amino-acid polypeptide reads, in one-letter code: Methionine--tRNA ligase (679 aa).

The short motif at 14–24 (PYANGSIHLGH) is the 'HIGH' region element. The Zn(2+) site is built by cysteine 145, cysteine 148, cysteine 158, and cysteine 161. A 'KMSKS' region motif is present at residues 331-335 (KMSKS). Lysine 334 serves as a coordination point for ATP. One can recognise a tRNA-binding domain in the interval 577-679 (TFAAVDLRVA…SGAKPGQRIK (103 aa)).

It belongs to the class-I aminoacyl-tRNA synthetase family. MetG type 1 subfamily. Homodimer. Zn(2+) serves as cofactor.

It is found in the cytoplasm. It carries out the reaction tRNA(Met) + L-methionine + ATP = L-methionyl-tRNA(Met) + AMP + diphosphate. In terms of biological role, is required not only for elongation of protein synthesis but also for the initiation of all mRNA translation through initiator tRNA(fMet) aminoacylation. This is Methionine--tRNA ligase from Pseudomonas putida (strain ATCC 700007 / DSM 6899 / JCM 31910 / BCRC 17059 / LMG 24140 / F1).